The following is a 169-amino-acid chain: MALLPILEFPDPRLRTVAKPVTQVDDSIRQLVDDMFETMYDAPGIGLAATQVNVHKRVVVIDVSEDKSQPLVFINPEIEVLDEELSQYDEGCLSVPGFYETVERPGHIRVKALDRAGNAFELQPQGLLAVCIQHELDHLNGKLFVDHISPFKRSRIRSKLEKKHKAGVR.

The Fe cation site is built by Cys-92 and His-134. The active site involves Glu-135. His-138 is a binding site for Fe cation.

This sequence belongs to the polypeptide deformylase family. Requires Fe(2+) as cofactor.

The catalysed reaction is N-terminal N-formyl-L-methionyl-[peptide] + H2O = N-terminal L-methionyl-[peptide] + formate. Its function is as follows. Removes the formyl group from the N-terminal Met of newly synthesized proteins. Requires at least a dipeptide for an efficient rate of reaction. N-terminal L-methionine is a prerequisite for activity but the enzyme has broad specificity at other positions. The protein is Peptide deformylase of Cellvibrio japonicus (strain Ueda107) (Pseudomonas fluorescens subsp. cellulosa).